Consider the following 85-residue polypeptide: Progonadoliberin-2 (85 aa).

An N-terminal signal peptide occupies residues 1–23; sequence MCVSRLALLLGLLLCVGAQLSFA. Q24 carries the pyrrolidone carboxylic acid modification. A Glycine amide modification is found at G33.

This sequence belongs to the GnRH family. In terms of tissue distribution, expressed in only one cell group in the mesencephalon.

Its subcellular location is the secreted. Functionally, stimulates the secretion of gonadotropins. This is Progonadoliberin-2 (gnrh2) from Haplochromis burtoni (Burton's mouthbrooder).